Consider the following 629-residue polypeptide: Chaperone protein DnaK (629 aa).

Low complexity predominate over residues 576-587 (QAYQQQQDAQAG). Residues 576–629 (QAYQQQQDAQAGAAGGAGGMGGMGGMADGPGGAADADGDDEEYVDADFEDVDEE) form a disordered region. Over residues 588–607 (AAGGAGGMGGMGGMADGPGG) the composition is skewed to gly residues. Acidic residues predominate over residues 611–629 (ADGDDEEYVDADFEDVDEE).

Belongs to the heat shock protein 70 family.

Functionally, acts as a chaperone. The protein is Chaperone protein DnaK of Halobacterium salinarum (strain ATCC 29341 / DSM 671 / R1).